The primary structure comprises 592 residues: Glutamine-rich protein 2 (592 aa).

Positions 488-592 are disordered; the sequence is QLQQAQHARP…TRGPRSTAAH (105 aa). Positions 544 to 567 are enriched in polar residues; sequence LQSNVSHSSIPTDIASLQGSQQGL.

In terms of assembly, interacts with AKAP3, ODF2 and TSSK4. Interacts with AKAP4. Expressed in testis. Not detected in heart, brain, kidney, stomach, ovary, liver, lung and uterus.

It localises to the nucleus membrane. The protein localises to the nucleus. It is found in the cytoplasm. Its subcellular location is the cell projection. The protein resides in the cilium. It localises to the flagellum. Has an essential role in the formation of sperm flagella and flagellar structure maintainance. It acts as a suppressor of ubiquitination and degradation of proteins involved in flagellar development and motility. This Mus musculus (Mouse) protein is Glutamine-rich protein 2.